A 99-amino-acid polypeptide reads, in one-letter code: Large ribosomal subunit protein uL23 (99 aa).

Belongs to the universal ribosomal protein uL23 family. In terms of assembly, part of the 50S ribosomal subunit. Contacts protein L29, and trigger factor when it is bound to the ribosome.

One of the early assembly proteins it binds 23S rRNA. One of the proteins that surrounds the polypeptide exit tunnel on the outside of the ribosome. Forms the main docking site for trigger factor binding to the ribosome. The polypeptide is Large ribosomal subunit protein uL23 (Blochmanniella floridana).